Reading from the N-terminus, the 400-residue chain is 2'-5'-oligoadenylate synthase 1 (400 aa).

The tract at residues 13–60 (DKFIEDYLLPDTCFRMQINHAIDIICGFLKERCFRGSSYPVCVSKVVK) is interaction with dsRNA. Residue serine 63 participates in ATP binding. Residues aspartate 75, aspartate 77, and aspartate 148 each coordinate Mg(2+). The interaction with dsRNA stretch occupies residues 200–210 (QRPTKLKSLIR). ATP contacts are provided by arginine 210, lysine 213, and glutamine 229. Cysteine 397 is lipidated: S-geranylgeranyl cysteine.

This sequence belongs to the 2-5A synthase family. Monomer. Homotetramer. It depends on Mg(2+) as a cofactor. Prenylated at C-terminal. C-terminal prenylation is necessary to initiate a block to SARS-CoV-2 and is associated with protection from severe COVID-1. The prenylated form is targeted to perinuclear structures rich in viral dsRNA, whereas the non-prenylated form is diffusely localized and unable to initiate a detectable block to SARS-CoV-2 replication. C-terminal prenylation is also necessary to initiate a block to cardiovirus EMCV. Post-translationally, not prenylated at C-terminal. The non-prenylated form is diffusely localized and unable to initiate a detectable block to SARS-CoV-2 replication. In terms of tissue distribution, expressed in lungs.

The protein localises to the cytoplasm. It localises to the mitochondrion. Its subcellular location is the nucleus. It is found in the microsome. The protein resides in the endoplasmic reticulum. The protein localises to the secreted. It catalyses the reaction 3 ATP = 5'-triphosphoadenylyl-(2'-&gt;5')-adenylyl-(2'-&gt;5')-adenosine + 2 diphosphate. Produced as a latent enzyme which is activated by dsRNA generated during the course of viral infection. The dsRNA activator must be at least 15 nucleotides long, and no modification of the 2'-hydroxyl group is tolerated. ssRNA or dsDNA do not act as activators. Functionally, interferon-induced, dsRNA-activated antiviral enzyme which plays a critical role in cellular innate antiviral response. In addition, it may also play a role in other cellular processes such as apoptosis, cell growth, differentiation and gene regulation. Synthesizes higher oligomers of 2'-5'-oligoadenylates (2-5A) from ATP which then bind to the inactive monomeric form of ribonuclease L (RNase L) leading to its dimerization and subsequent activation. Activation of RNase L leads to degradation of cellular as well as viral RNA, resulting in the inhibition of protein synthesis, thus terminating viral replication. Can mediate the antiviral effect via the classical RNase L-dependent pathway or an alternative antiviral pathway independent of RNase L. The secreted form displays antiviral effect against vesicular stomatitis virus (VSV), herpes simplex virus type 2 (HSV-2), and encephalomyocarditis virus (EMCV) and stimulates the alternative antiviral pathway independent of RNase L. Its function is as follows. When prenylated at C-terminal, acts as a double-stranded RNA (dsRNA) sensor specifically targeted to membranous replicative organelles in SARS coronavirus-2/SARS-CoV-2 infected cells where it binds to dsRNA structures in the SARS-CoV-2 5'-UTR and initiates a potent block to SARS-CoV-2 replication. Recognizes short stretches of dsRNA and activates RNase L. The binding is remarkably specific, with two conserved stem loops in the SARS-CoV-2 5'- untranslated region (UTR) constituting the principal viral target. The same mechanism is necessary to initiate a block to cardiovirus EMCV. Not prenylated at C-terminal, is diffusely localized and unable to initiate a detectable block to SARS-CoV-2 replication. This is 2'-5'-oligoadenylate synthase 1 (OAS1) from Homo sapiens (Human).